The chain runs to 437 residues: Magnetosome protein MamN (437 aa).

11 helical membrane passes run 26–46 (LAVL…GSYT), 53–73 (SVYF…ALLA), 95–115 (WILV…NSLV), 136–156 (VPVI…TMIG), 174–194 (FIAG…VFFE), 226–246 (LLSY…LAGP), 252–268 (GWIA…LGRF), 281–301 (DILF…VGIL), 320–340 (AILL…GTSA), 358–378 (AAWW…LPGA), and 416–436 (WGMP…AVLV).

It belongs to the arsenite-antimonite (ArsB) efflux (TC 2.A.45) family.

The protein localises to the magnetosome membrane. Its function is as follows. Plays a role in biomineralization; might regulate pH in the magnetosome. In Paramagnetospirillum magneticum (strain ATCC 700264 / AMB-1) (Magnetospirillum magneticum), this protein is Magnetosome protein MamN (mamN).